A 32-amino-acid chain; its full sequence is MSDIN-like toxin proprotein a (32 aa).

Positions 1-10 (MSDINATRLP) are excised as a propeptide. Positions 11–18 (IIGILLPP) form a cross-link, cyclopeptide (Ile-Pro). Positions 19 to 32 (CIGDDVTLLLTRGE) are excised as a propeptide.

It belongs to the MSDIN fungal toxin family. In terms of processing, processed by the macrocyclase-peptidase enzyme POPB to yield a toxic cyclic octapeptide. POPB first removes 10 residues from the N-terminus. Conformational trapping of the remaining peptide forces the enzyme to release this intermediate rather than proceed to macrocyclization. The enzyme rebinds the remaining peptide in a different conformation and catalyzes macrocyclization of the N-terminal 8 residues.

Probable toxin that belongs to the MSDIN-like toxin family responsible for a large number of food poisoning cases and deaths. In Amanita phalloides (Death cap), this protein is MSDIN-like toxin proprotein a.